Consider the following 257-residue polypeptide: Global transcriptional regulator CodY (257 aa).

Positions Met1–Leu155 are GAF domain. The segment at residues Ala203 to Arg222 is a DNA-binding region (H-T-H motif).

This sequence belongs to the CodY family.

The protein resides in the cytoplasm. Functionally, DNA-binding global transcriptional regulator which is involved in the adaptive response to starvation and acts by directly or indirectly controlling the expression of numerous genes in response to nutrient availability. During rapid exponential growth, CodY is highly active and represses genes whose products allow adaptation to nutrient depletion. In Staphylococcus carnosus (strain TM300), this protein is Global transcriptional regulator CodY.